We begin with the raw amino-acid sequence, 348 residues long: F(420)H(2) dehydrogenase subunit H (348 aa).

The next 8 helical transmembrane spans lie at 20 to 40 (GVVG…AVWL), 93 to 113 (IFMM…AVFI), 127 to 147 (ISVL…FMIA), 172 to 192 (PLGI…IVEI), 198 to 218 (LLWN…ALMA), 259 to 279 (ILGS…PAFV), 286 to 306 (GLIA…MTII), and 328 to 348 (LLPL…YLGA).

The protein belongs to the complex I subunit 1 family. As to quaternary structure, the FPO complex is composed of at least 13 different subunits. FpoA, FpoH, FpoJ, FpoK, FpoL, FpoM and FpoN proteins constitute the membrane sector of the complex.

It localises to the cell membrane. The catalysed reaction is methanophenazine + reduced coenzyme F420-(gamma-L-Glu)(n) = dihydromethanophenazine + oxidized coenzyme F420-(gamma-L-Glu)(n) + H(+). Functionally, component of the F(420)H(2) dehydrogenase (FPO complex) which is part of the energy-conserving F(420)H(2):heterodisulfide oxidoreductase system. The membrane-bound electron transfer system of the complex plays an important role in the metabolism of methylotrophic methanogens when the organisms grow on methanol or methylamines. Catalyzes the oxidation of methanophenazine to dihydromethanophenazine. It shuttles electrons from F(420)H(2), via FAD and iron-sulfur (Fe-S) centers, to methanophenazine (an electron carrier in the membrane). It couples the redox reaction to proton translocation (for every two electrons transferred, two hydrogen ions are translocated across the cytoplasmic membrane), and thus conserves the redox energy in a proton gradient. This chain is F(420)H(2) dehydrogenase subunit H, found in Methanosarcina acetivorans (strain ATCC 35395 / DSM 2834 / JCM 12185 / C2A).